The following is a 284-amino-acid chain: Tryptophan 2,3-dioxygenase (284 aa).

Substrate is bound by residues 53–57 (FIVQH), Y115, and R119. H242 provides a ligand contact to heme. Position 256 (T256) interacts with substrate.

This sequence belongs to the tryptophan 2,3-dioxygenase family. Homotetramer. Heme serves as cofactor.

The enzyme catalyses L-tryptophan + O2 = N-formyl-L-kynurenine. It functions in the pathway amino-acid degradation; L-tryptophan degradation via kynurenine pathway; L-kynurenine from L-tryptophan: step 1/2. Heme-dependent dioxygenase that catalyzes the oxidative cleavage of the L-tryptophan (L-Trp) pyrrole ring and converts L-tryptophan to N-formyl-L-kynurenine. Catalyzes the oxidative cleavage of the indole moiety. The chain is Tryptophan 2,3-dioxygenase from Bordetella parapertussis (strain 12822 / ATCC BAA-587 / NCTC 13253).